A 906-amino-acid chain; its full sequence is Coatomer subunit beta' (906 aa).

WD repeat units follow at residues 13 to 52 (ARSD…LVKT), 55 to 94 (VCDL…RVHM), 97 to 136 (AHSD…SCSQ), 140 to 180 (GHTH…PNFT), 183 to 224 (GHEK…CVQT), and 227 to 266 (GHAQ…LEST). Lys-627 carries the post-translational modification N6-acetyllysine. The segment at 837–870 (EEGKDFQPSRSTAQQELDGKPASPTPVIVASHTA) is disordered. Ser-859 is modified (phosphoserine). The residue at position 861 (Thr-861) is a Phosphothreonine. The stretch at 866–891 (ASHTANKEEKSLLELEVDLDNLELED) forms a coiled coil.

Belongs to the WD repeat COPB2 family. In terms of assembly, oligomeric complex that consists of at least the alpha, beta, beta', gamma, delta, epsilon and zeta subunits. Probably interacts with PEX11A. Interacts with SCYL1. Interacts with JAGN1.

The protein resides in the cytoplasm. It localises to the cytosol. Its subcellular location is the golgi apparatus membrane. The protein localises to the cytoplasmic vesicle. It is found in the COPI-coated vesicle membrane. Functionally, the coatomer is a cytosolic protein complex that binds to dilysine motifs and reversibly associates with Golgi non-clathrin-coated vesicles, which further mediate biosynthetic protein transport from the ER, via the Golgi up to the trans Golgi network. Coatomer complex is required for budding from Golgi membranes, and is essential for the retrograde Golgi-to-ER transport of dilysine-tagged proteins. In mammals, the coatomer can only be recruited by membranes associated to ADP-ribosylation factors (ARFs), which are small GTP-binding proteins; the complex also influences the Golgi structural integrity, as well as the processing, activity, and endocytic recycling of LDL receptors. In terms of biological role, this coatomer complex protein, essential for Golgi budding and vesicular trafficking, is a selective binding protein (RACK) for protein kinase C, epsilon type. It binds to Golgi membranes in a GTP-dependent manner. The polypeptide is Coatomer subunit beta' (COPB2) (Homo sapiens (Human)).